Reading from the N-terminus, the 131-residue chain is Small ribosomal subunit protein uS12c (131 aa).

It belongs to the universal ribosomal protein uS12 family. As to quaternary structure, part of the 30S ribosomal subunit.

It is found in the plastid. Its subcellular location is the chloroplast. With S4 and S5 plays an important role in translational accuracy. Located at the interface of the 30S and 50S subunits. In Stigeoclonium helveticum (Green alga), this protein is Small ribosomal subunit protein uS12c (rps12).